The sequence spans 238 residues: Probable transcriptional regulatory protein VV2_1184 (238 aa).

This sequence belongs to the TACO1 family.

It is found in the cytoplasm. In Vibrio vulnificus (strain CMCP6), this protein is Probable transcriptional regulatory protein VV2_1184.